The sequence spans 352 residues: UDP-3-O-acylglucosamine N-acyltransferase (352 aa).

The active-site Proton acceptor is the His-257.

Belongs to the transferase hexapeptide repeat family. LpxD subfamily. Homotrimer.

It catalyses the reaction a UDP-3-O-[(3R)-3-hydroxyacyl]-alpha-D-glucosamine + a (3R)-hydroxyacyl-[ACP] = a UDP-2-N,3-O-bis[(3R)-3-hydroxyacyl]-alpha-D-glucosamine + holo-[ACP] + H(+). It participates in bacterial outer membrane biogenesis; LPS lipid A biosynthesis. In terms of biological role, catalyzes the N-acylation of UDP-3-O-acylglucosamine using 3-hydroxyacyl-ACP as the acyl donor. Is involved in the biosynthesis of lipid A, a phosphorylated glycolipid that anchors the lipopolysaccharide to the outer membrane of the cell. The polypeptide is UDP-3-O-acylglucosamine N-acyltransferase (Methylobacterium nodulans (strain LMG 21967 / CNCM I-2342 / ORS 2060)).